The chain runs to 144 residues: Large ribosomal subunit protein uL16m (144 aa).

It belongs to the universal ribosomal protein uL16 family.

Its subcellular location is the mitochondrion. In Dictyostelium discoideum (Social amoeba), this protein is Large ribosomal subunit protein uL16m (mrpl16).